A 529-amino-acid polypeptide reads, in one-letter code: MLMLLVRGTHFENNWSKLIPPAPLDATVSEPPVPDSGEPDSGVPWRRSDEALRVNVGGVRRRLSARALARFPGTRLGRLQAAKSEEQARRLCDDYDAAAREFYFDRHPGFFLSLLHFYRTGRLHVLDELCVFAFGQEADYWGLGENALAACCRARYLERRVARPRAWDEDSDTPSSVDPNPDEISDVQRELARYGAARCGRLRRRLWLTMENPGYSLPSKLFSCVSIGVVLASIAAMCIHSLPEYQAREAAAAVATVAAGRSAEDVRDDPVLRRLEYFCIAWFSFEVSSRLLLAPSTRNFFCHPLNLIDIVSVLPFYLTLLASVALGGNNHGGTSGEELGHLGKVVQVFRLMRIFRVLKLARHSTGLRSLGATLKHSYREVGILLLYLAVGVSVFSGVAYTAEKEEDVGFDTIPACWWWGTVSMTTVGYGDVVPVTLAGKLAASGCILGGILVVALPITIIFNKFSHFYQRQKALEAAVRNSGHREFEDLLSSVDGVSDASLETSRETSQEGRSADLEAPSESPKPQIY.

The Cytoplasmic portion of the chain corresponds to 1–217 (MLMLLVRGTH…LTMENPGYSL (217 aa)). A helical membrane pass occupies residues 218–239 (PSKLFSCVSIGVVLASIAAMCI). Residues 240 to 270 (HSLPEYQAREAAAAVATVAAGRSAEDVRDDP) lie on the Extracellular side of the membrane. The helical transmembrane segment at 271–293 (VLRRLEYFCIAWFSFEVSSRLLL) threads the bilayer. The Cytoplasmic segment spans residues 294–304 (APSTRNFFCHP). A helical transmembrane segment spans residues 305 to 322 (LNLIDIVSVLPFYLTLLA). Over 323 to 342 (SVALGGNNHGGTSGEELGHL) the chain is Extracellular. A helical; Voltage-sensor transmembrane segment spans residues 343-363 (GKVVQVFRLMRIFRVLKLARH). Topologically, residues 364–378 (STGLRSLGATLKHSY) are cytoplasmic. The chain crosses the membrane as a helical span at residues 379-400 (REVGILLLYLAVGVSVFSGVAY). Over 401–413 (TAEKEEDVGFDTI) the chain is Extracellular. An intramembrane region (helical) is located at residues 414–425 (PACWWWGTVSMT). A Selectivity filter motif is present at residues 426 to 431 (TVGYGD). The stretch at 426–433 (TVGYGDVV) is an intramembrane region. The Extracellular portion of the chain corresponds to 434 to 440 (PVTLAGK). The helical transmembrane segment at 441–469 (LAASGCILGGILVVALPITIIFNKFSHFY) threads the bilayer. Topologically, residues 470–529 (QRQKALEAAVRNSGHREFEDLLSSVDGVSDASLETSRETSQEGRSADLEAPSESPKPQIY) are cytoplasmic. Residues 498–529 (SDASLETSRETSQEGRSADLEAPSESPKPQIY) are disordered. Residues 504–516 (TSRETSQEGRSAD) are compositionally biased toward basic and acidic residues.

It belongs to the potassium channel family. S (TC 1.A.1.2) subfamily. Kv9.1/KCNS1 sub-subfamily. In terms of assembly, heterotetramer with KCNB1. Heterotetramer with KCNB2. Does not form homomultimers.

It localises to the cell membrane. Potassium channel regulatory subunit that modulate the delayed rectifier voltage-gated potassium channel activity of KCNB1 and KCNB2 by altering their kinetics, expression levels, and shifting the half-inactivation potential to more polarized values. While it does not form functional channels on its own, it can form functional heterotetrameric channels with KCNB1 and KCNB2. Each regulatory subunit has unique regulatory properties that can lead to extensive inhibition, significant changes in kinetics, and/or substantial shifts in the voltage dependencies of the inactivation process. The chain is Delayed-rectifier potassium channel regulatory subunit KCNS1 from Lemur catta (Ring-tailed lemur).